The chain runs to 303 residues: Sulfate adenylyltransferase subunit 2 (303 aa).

This sequence belongs to the PAPS reductase family. CysD subfamily. In terms of assembly, heterodimer composed of CysD, the smaller subunit, and CysN.

It catalyses the reaction sulfate + ATP + H(+) = adenosine 5'-phosphosulfate + diphosphate. Its pathway is sulfur metabolism; hydrogen sulfide biosynthesis; sulfite from sulfate: step 1/3. In terms of biological role, with CysN forms the ATP sulfurylase (ATPS) that catalyzes the adenylation of sulfate producing adenosine 5'-phosphosulfate (APS) and diphosphate, the first enzymatic step in sulfur assimilation pathway. APS synthesis involves the formation of a high-energy phosphoric-sulfuric acid anhydride bond driven by GTP hydrolysis by CysN coupled to ATP hydrolysis by CysD. The sequence is that of Sulfate adenylyltransferase subunit 2 from Aliarcobacter butzleri (strain RM4018) (Arcobacter butzleri).